A 198-amino-acid polypeptide reads, in one-letter code: NAD(P)H dehydrogenase (quinone) (198 aa).

The region spanning 4-190 (ILVLYYSMYG…ILASFQGAHV (187 aa)) is the Flavodoxin-like domain. FMN contacts are provided by residues 10 to 15 (SMYGHI) and 79 to 81 (TRF). Residue tyrosine 12 coordinates NAD(+). Residue tryptophan 99 participates in substrate binding. FMN-binding positions include 114–119 (STGTGG) and histidine 134.

Belongs to the WrbA family. Requires FMN as cofactor.

It carries out the reaction a quinone + NADH + H(+) = a quinol + NAD(+). The catalysed reaction is a quinone + NADPH + H(+) = a quinol + NADP(+). This chain is NAD(P)H dehydrogenase (quinone), found in Azotobacter vinelandii (strain DJ / ATCC BAA-1303).